A 238-amino-acid chain; its full sequence is 2-C-methyl-D-erythritol 4-phosphate cytidylyltransferase (238 aa).

Belongs to the IspD/TarI cytidylyltransferase family. IspD subfamily.

The enzyme catalyses 2-C-methyl-D-erythritol 4-phosphate + CTP + H(+) = 4-CDP-2-C-methyl-D-erythritol + diphosphate. Its pathway is isoprenoid biosynthesis; isopentenyl diphosphate biosynthesis via DXP pathway; isopentenyl diphosphate from 1-deoxy-D-xylulose 5-phosphate: step 2/6. Functionally, catalyzes the formation of 4-diphosphocytidyl-2-C-methyl-D-erythritol from CTP and 2-C-methyl-D-erythritol 4-phosphate (MEP). The protein is 2-C-methyl-D-erythritol 4-phosphate cytidylyltransferase of Shewanella amazonensis (strain ATCC BAA-1098 / SB2B).